A 173-amino-acid polypeptide reads, in one-letter code: Disulfide bond formation protein B (173 aa).

Residues 1-11 (MNALQWSFRAQ) lie on the Cytoplasmic side of the membrane. A helical transmembrane segment spans residues 12–28 (CLTGFLFCTGLLAYAIF). Topologically, residues 29–46 (LQLHQGLEPCPLCIFQRI) are periplasmic. The cysteines at positions 38 and 41 are disulfide-linked. The chain crosses the membrane as a helical span at residues 47–63 (AFAVLGILFLIAGLYNS). At 64 to 70 (SNVYTRK) the chain is on the cytoplasmic side. A helical membrane pass occupies residues 71–88 (AYGLLIFLTAIIGTGIAG). The Periplasmic portion of the chain corresponds to 89-145 (RHVWVQLMPHNTISSCGSPLSFLSETMGPFEVFRTVLTGTSNCGNIDWRFLGLSMPM). A disulfide bond links Cys-104 and Cys-131. A helical transmembrane segment spans residues 146-164 (WSMFWFVALALLGLLVGFK). Topologically, residues 165–173 (AERRKPLFS) are cytoplasmic.

This sequence belongs to the DsbB family.

Its subcellular location is the cell inner membrane. In terms of biological role, required for disulfide bond formation in some periplasmic proteins. Acts by oxidizing the DsbA protein. In Xylella fastidiosa (strain Temecula1 / ATCC 700964), this protein is Disulfide bond formation protein B.